Here is a 77-residue protein sequence, read N- to C-terminus: Large ribosomal subunit protein uL29 (77 aa).

Belongs to the universal ribosomal protein uL29 family.

The protein is Large ribosomal subunit protein uL29 of Mycolicibacterium gilvum (strain PYR-GCK) (Mycobacterium gilvum (strain PYR-GCK)).